A 416-amino-acid chain; its full sequence is D-amino acid dehydrogenase 2 (416 aa).

3 to 17 (ITVLGAGVVGTAAAY) contacts FAD.

Belongs to the DadA oxidoreductase family. The cofactor is FAD.

It carries out the reaction a D-alpha-amino acid + A + H2O = a 2-oxocarboxylate + AH2 + NH4(+). In terms of biological role, oxidative deamination of D-amino acids. The protein is D-amino acid dehydrogenase 2 (dadA2) of Mesorhizobium japonicum (strain LMG 29417 / CECT 9101 / MAFF 303099) (Mesorhizobium loti (strain MAFF 303099)).